We begin with the raw amino-acid sequence, 338 residues long: Large ribosomal subunit protein uL10 (338 aa).

Residues 297–338 are disordered; that stretch reads PSAQQTQTQQSTAEEKKEEKKEEEKKGPSEEEIGSGLASLFG. A compositionally biased stretch (low complexity) spans 298 to 308; the sequence is SAQQTQTQQST. The segment covering 309–325 has biased composition (basic and acidic residues); the sequence is AEEKKEEKKEEEKKGPS.

It belongs to the universal ribosomal protein uL10 family. Part of the 50S ribosomal subunit. Forms part of the ribosomal stalk which helps the ribosome interact with GTP-bound translation factors. Forms a heptameric L10(L12)2(L12)2(L12)2 complex, where L10 forms an elongated spine to which the L12 dimers bind in a sequential fashion.

Forms part of the ribosomal stalk, playing a central role in the interaction of the ribosome with GTP-bound translation factors. This is Large ribosomal subunit protein uL10 from Saccharolobus islandicus (strain Y.N.15.51 / Yellowstone #2) (Sulfolobus islandicus).